Consider the following 153-residue polypeptide: MISQSTLFLFILLIIGLIAKNQSLTVAIGVLFLLKFTFLGDKVFPYLQTKGINLGVTVITIAVLVPIATGEIGFKQLGEAAKSYYAWIALASGVAVALLAKGGVQLLTTDPHITTALVFGTVIAVALFNGVAVGPLIGAGIAYAVMSIIQMFK.

Transmembrane regions (helical) follow at residues 8-28 (FLFI…TVAI), 54-74 (LGVT…EIGF), 87-107 (WIAL…VQLL), and 117-137 (LVFG…GPLI).

The protein belongs to the UPF0756 family.

It is found in the cell membrane. The chain is UPF0756 membrane protein BCB4264_A4705 from Bacillus cereus (strain B4264).